The sequence spans 155 residues: UPF0305 protein MTH_811 (155 aa).

It belongs to the UPF0305 family.

This Methanothermobacter thermautotrophicus (strain ATCC 29096 / DSM 1053 / JCM 10044 / NBRC 100330 / Delta H) (Methanobacterium thermoautotrophicum) protein is UPF0305 protein MTH_811.